The following is a 2497-amino-acid chain: MTPEPIAIIGSGCKFPGSSTSPSRLWDLISKPKDVASKPPADRFNIDGFYHPNPTNLLTTNAKESYFISENVRAFDNTFFNIAANEATSLDPQQRLLLETVYESVEAAGLRLEALRGSSTGVFCGVMCADWEAVVGLDKVVPEYAISGLARSNLANRISYFFDWNGPSMSIDTACSSSMVALHQGITALQSGECSAVAVIGTNLILTPNLYFAASNVHMLSPESRGRMWDHKANGYVRGEGVASLMLKRLSDAVADGDRIECVIRASGVNQDGRTLGLTMPSGEAQEKLIRSTYALAGLDPSRAEDRPQYFEAHGTGTQAGDYQEASGIYNTFFGANPKASAEEVLHVGSIKTVIGHSEGCAGLAGLIKASLCIQHGLIPPNLHFERLNPKLEPYSSHLKVPTALTKWPELPSGVPRRVSVNSFGFGGTNSHAILESYEPNLHGTTNGHVNGTSKKTNGLLNGASNLLDSLTNGEESTKPALLPFVFSAASEKTLGALLEKYDSYLGENPNVEAMDLAWSLIQKRSALMYRVTLYAPTIEGLQSEIQRELALRKANTPSTVISRPDTGKKRILGIFTGQGAQWPQMGLDIISTFPNARVWFEELQASLDSLPTAHKPDFSLLEELSAPKPSSRVQEAAVAQPICTAVQIVLVKLLSAIGISFDQVVGHSSGEVAAAYAAGVLNAHDAIRIAYLRGRVAHLAGANDKAGGMLAAGLSIEEATAFCELPEFAGRIMIAACNSPSSVTLSGDADAIQEAEKHLKGQDKFARRVLVDTAYHSHHMEPCSDPYLSAMTGCKIQLGEPTATTWYSTVYEGEKPNSSSHANALVGEYWKDNMRNPVLFYQALMQSITDAPPSLIVEVGPHPALKGPVLQAISEAVQTNSTIPYISTLSRGATGVKALAVTIGSLWTHLGAEGVKVEQYVALREPSRKLKFIHDLPSYPFDHSQSYWTETRRSKAYLGRGPRHELLGDLSEENTEGEWRWRNFLFRSNLEYLEGHQIQAQTIFPATGYVAMAFEAAGIMAEGRSMRLVQINDLEIDQAIAFLDDVKGIETLFRVYQIRSDGNVTNAAFSCHADIGGTLKTCASGQLVVTWGEMEANLLPSKLPSPSGMSVVDTDEFYASLGKLGYGYTGLFRGITSLKRKLNTSSGFLDNVGSEELLLHPSTMDCGLQCLLAAVGAPGDGELSRLQIPTRIQTTVINPIFCGKNNVLVGDSLEFEAAVTGLSADGASGDVSLFTRDGPGLIQFEGVHVTPLMQPTASDDRPMFSEITWGGLLPNAEPLHGPAPPLQFWAGNMDDPQHMCFAVIQEVLSKLTAEDRQRLEGYRVDVVEWFDHVVEQTRLGENPLCMKEWVDEDPTEALIHLAKTAQPIIVEITDVIRKHFLNFLRGETPMIEVYRQDNLLTRFYDQEQELKYMSLRVGDVAGQLAFRYPRMKILEIGAGTGSATRAVLGRIGQYFHSYTFTDISAGFFEDAEATFTEYADRMVYRVLDIEQDPTGQGFDANSYDLVIAANVLHATKYLEPTMNNVRRLLKPGGHLIALEITNEHILQDALLFSAFEGWWLGKHDNRPWGPKISVPKWEELLRKTGFGGVQSILPAPEKTEYSFWGYSTFVTQAINDRLEQLSEPSASDPATSIISTSDSSEKFGTLMIIGGVTDKTSYLVPALKKLLAPSFERIIHTLTIDSIEYQDASLAAALCLADMDVPTFQDLTDNKISCLKRLLEVGRRLLWVTAGSESENPYLSMSKGFLSCIGYEYEGSIHQYLNIVDPEAVNAQILSTTLMRMLLSDSTNDYSLSTGVGSIELELRLEDNVMKIPRIMNATPLNHRYAAGQRAVYSQADLEKSTVQIRSVQGNLEFFEGPVEGSTETQLDQGQSTIPVHVRYSASLALKVQNGGFLNLVLGTHEVSNVRLIAFSDNNASRVSVPSALCWELTNNIAEDQEAQFLNIMASAVLARNIIQTASTNTSLLVHEANDALRHAIWTQAVAKGVQPYFSTSDTSKKQSNSSTLVFHETSSTRALARILPTGLSVIANFGKAAPNGVMAKIKPLLSPDVTQEDTGTLYRVSPLLSKGFNLDEVTQTFKVSRIVATEVMHSLANNFAAVHGETNVISIDKLSGRDAKTGELEILDWTQARELPVRVSSASSQVKLSASKTYLLVASRTPKVEPQWLDEMSRLGARVRIEPMDVTDRESILSVDRTIRRTLPPIGGVVNGAMVLQDRMFADATLDNILGTYKPKVQGSRLLEDIYGDEDLDFFILFGSATAILGNMGQSSYGAATNFMRSLIRGRRERNLVGSIIHPAEVRGVGYISRMGIELSRLMNKLVGSHIVSEKDLHETFAEAILAGKPASGRNPEVISGFNQHDPEEIPDLIWYSNPETWPLVNYRLQSTTSQSTSTLMPIKQQLESATSLAEAAELVLIALNAKIVQKLHLSEDTHMTPDTRLAELGADSLVAVDLRTWFIRELDVEIPILQIQSGASIGDLANSATSKISDSLIPNVKR.

The 435-residue stretch at 3 to 437 folds into the Ketosynthase family 3 (KS3) domain; it reads PEPIAIIGSG…GTNSHAILES (435 aa). Active-site for beta-ketoacyl synthase activity residues include Cys-175, His-314, and His-357. Positions 575–896 are malonyl-CoA:ACP transacylase (MAT) domain; it reads IFTGQGAQWP…ISTLSRGATG (322 aa). The active-site For malonyltransferase activity is Ser-669. The segment at 965–1095 is N-terminal hotdog fold; sequence HELLGDLSEE…GQLVVTWGEM (131 aa). Residues 965–1255 form a dehydratase (DH) domain region; sequence HELLGDLSEE…EGVHVTPLMQ (291 aa). The 295-residue stretch at 965 to 1259 folds into the PKS/mFAS DH domain; the sequence is HELLGDLSEE…VTPLMQPTAS (295 aa). His-997 functions as the Proton acceptor; for dehydratase activity in the catalytic mechanism. A C-terminal hotdog fold region spans residues 1110-1259; sequence MSVVDTDEFY…VTPLMQPTAS (150 aa). Asp-1166 functions as the Proton donor; for dehydratase activity in the catalytic mechanism. The interval 1399-1594 is methyltransferase (CMet) domain; sequence NLLTRFYDQE…TGFGGVQSIL (196 aa). The tract at residues 2150 to 2294 is ketoreductase (KR) domain; sequence KTYLLVASRT…RRERNLVGSI (145 aa). In terms of domain architecture, Carrier spans 2409–2487; the sequence is EAAELVLIAL…DLANSATSKI (79 aa). Residue Ser-2447 is modified to O-(pantetheine 4'-phosphoryl)serine.

The cofactor is pantetheine 4'-phosphate.

Its pathway is polyketide biosynthesis. Highly reducing polyketide synthase (HR-PKS); part of the gene cluster that mediates the biosynthesis of aurovertins, fungal polyketides that exhibit potent inhibition of adenosine triphosphate synthase. Tha biosynthesis starts with the HR-PKS aurA that selects propionate as the starter unit; synthesizes a hexa-ene chain through the repeated functions of the KR and DH domains in the first six iterations; selectively introduces three alpha-methyl substitutions at C4, C6, and C16 using the S-adensylmethionine-dependent cMET; and shuts off KR and DH in the last three iterations to afford a 1,3,5-triketo portion that can undergo intramolecular cyclization to yield the alpha-pyrone intermediate. AurE may act as a cyclase and enhances the rate of pyrone formation and product release of aurA. The methyltransferase aurB then methylates the C17 hydroxyl group. C17 methylation is required to initiate epoxidation by the downstream monooxygenase aurC. The monooxygenase aurC and the epoxide hydrolase aurD can iteratively transform the terminal triene portion of the methylated precursor into the dioxabicyclo[3.2.1]octane scaffold of aurovertin E. Epoxidation modifications of the precursor occur in two separate steps; bis-epoxidation of the two terminal olefins takes place first, followed by another epoxidation that occurs at C7-C8 after tetrahydrofuran formation. The O-acyltransferase aurG converts aurovertin E to aurovertin A. In Calcarisporium arbuscula (Dendryphion arbuscula), this protein is Highly reducing polyketide synthase aurA.